A 118-amino-acid chain; its full sequence is uncharacterized protein (118 aa).

A run of 4 helical transmembrane segments spans residues I5 to M20, V25 to F42, A53 to L73, and L83 to I103.

Its subcellular location is the cell membrane. This is an uncharacterized protein from Bacillus subtilis (strain 168).